An 83-amino-acid polypeptide reads, in one-letter code: Short neurotoxin OKI-01/OKI-19 (83 aa).

The first 21 residues, 1-21 (MKTLLLTLVVVTIVCLDLGYT), serve as a signal peptide directing secretion. Cystine bridges form between cysteine 24/cysteine 45, cysteine 38/cysteine 62, cysteine 64/cysteine 75, and cysteine 76/cysteine 81.

It belongs to the three-finger toxin family. Short-chain subfamily. Type I alpha-neurotoxin sub-subfamily. Expressed by the venom gland.

It is found in the secreted. Functionally, binds to muscle nicotinic acetylcholine receptor (nAChR) and inhibit acetylcholine from binding to the receptor, thereby impairing neuromuscular transmission. This chain is Short neurotoxin OKI-01/OKI-19, found in Laticauda laticaudata (Blue-ringed sea krait).